The chain runs to 405 residues: Tryptophan synthase beta chain (405 aa).

The residue at position 95 (Lys-95) is an N6-(pyridoxal phosphate)lysine.

It belongs to the TrpB family. In terms of assembly, tetramer of two alpha and two beta chains. Requires pyridoxal 5'-phosphate as cofactor.

It carries out the reaction (1S,2R)-1-C-(indol-3-yl)glycerol 3-phosphate + L-serine = D-glyceraldehyde 3-phosphate + L-tryptophan + H2O. It participates in amino-acid biosynthesis; L-tryptophan biosynthesis; L-tryptophan from chorismate: step 5/5. In terms of biological role, the beta subunit is responsible for the synthesis of L-tryptophan from indole and L-serine. The polypeptide is Tryptophan synthase beta chain (trpB) (Pseudomonas putida (Arthrobacter siderocapsulatus)).